Here is an 873-residue protein sequence, read N- to C-terminus: Kinase suppressor of Ras 1 (873 aa).

Disordered stretches follow at residues 1–24 (MDRAALRAAAMGEKKEGGGGGAAA), 174–230 (EHKM…PGLS), and 251–281 (LHSFITPPTTPQLRRHAKLKPPRTPPPPSRK). The mediates association with membranes stretch occupies residues 1–170 (MDRAALRAAA…ALTCLRKVTG (170 aa)). Residues 206 to 216 (ASTQGPRSISV) show a composition bias toward polar residues. Phosphothreonine is present on residues Thr-256 and Thr-260. Ser-297 carries the post-translational modification Phosphoserine; by MARK3. Ser-320 carries the phosphoserine modification. A Phorbol-ester/DAG-type zinc finger spans residues 333 to 377 (THRFSTKSWLSQVCNVCQKSMIFGVKCKHCRLKCHNKCTKEAPAC). His-334 lines the Zn(2+) pocket. Ser-337 is subject to Phosphoserine. 7 residues coordinate Zn(2+): Cys-346, Cys-349, Cys-359, Cys-362, His-367, Cys-370, and Cys-377. Ser-392 carries the phosphoserine; by MARK3 modification. Phosphothreonine is present on Thr-411. 2 disordered regions span residues 416–473 (LTKK…RFSF) and 506–544 (HEAEAEEPEAGKSEAEDDEEDEVDDLPSSRRPWRGPISR). Residues 429-458 (SSSNPSSTTSSTPSSPAPFLTSSNPSSATT) are compositionally biased toward low complexity. Over residues 506–519 (HEAEAEEPEAGKSE) the composition is skewed to basic and acidic residues. Ser-518 carries the phosphoserine modification. Residues 520-530 (AEDDEEDEVDD) show a composition bias toward acidic residues. A Protein kinase domain is found at 563 to 833 (VELGEPIGQG…MDMLERLPKL (271 aa)). ATP is bound at residue 569–577 (IGQGRWGRV). Asp-683 (proton acceptor) is an active-site residue. ATP contacts are provided by Lys-685 and Asp-700. Ser-838 carries the post-translational modification Phosphoserine.

This sequence belongs to the protein kinase superfamily. TKL Ser/Thr protein kinase family. Homodimer. Heterodimerizes (via N-terminus) with BRAF (via N-terminus) in a MAP2K1/MEK1 or MAP2K2/MEK2-dependent manner. Interacts with MAP2K1/MEK1 and MAP2K2/MEK2. Binding to MAP2K1/MEK1 releases the intramolecular inhibitory interaction between KSR1 N-terminus and kinase domains which is required for the subsequent RSK1 dimerization with BRAF. Identified in a complex with AKAP13, MAP2K1 and BRAF. Interacts with AKAP13 and BRAF. Interacts with RAF and MAPK/ERK, in a Ras-dependent manner. Interacts with 14-3-3 proteins including YWHAB. Interacts with HSP90AA1/HSP90, YWHAE/14-3-3 and CDC37. The binding of 14-3-3 proteins to phosphorylated KSR1 prevents the membrane localization. Interacts with MARK3/C-TAK1. Interacts with PPP2R1A and PPP2CA. Interacts with VRK2. Post-translationally, phosphorylated on Ser-297 and, to a higher extent, on Ser-392 by MARK3. Dephosphorylated on Ser-392 by PPP2CA. Phosphorylated KSR1 is cytoplasmic and dephosphorylated KSR1 is membrane-associated. Phosphorylated by PKA at Ser-838. Phosphorylation at Ser-838 is required for cAMP-dependent activation of MAPK1 and/or MAPK3. In terms of tissue distribution, expressed in brain, spleen and testis. Isoform 1 is highly expressed spleen and weakly in testis, and isoform 2 is highly expressed in brain and weakly in testis.

Its subcellular location is the cytoplasm. The protein resides in the membrane. It localises to the cell membrane. It is found in the cell projection. The protein localises to the ruffle membrane. Its subcellular location is the endoplasmic reticulum membrane. It carries out the reaction L-seryl-[protein] + ATP = O-phospho-L-seryl-[protein] + ADP + H(+). It catalyses the reaction L-threonyl-[protein] + ATP = O-phospho-L-threonyl-[protein] + ADP + H(+). Part of a multiprotein signaling complex which promotes phosphorylation of Raf family members and activation of downstream MAP kinases. Independently of its kinase activity, acts as MAP2K1/MEK1 and MAP2K2/MEK2-dependent allosteric activator of BRAF; upon binding to MAP2K1/MEK1 or MAP2K2/MEK2, dimerizes with BRAF and promotes BRAF-mediated phosphorylation of MAP2K1/MEK1 and/or MAP2K2/MEK2. Promotes activation of MAPK1 and/or MAPK3, both in response to EGF and to cAMP. Its kinase activity is unsure. Some protein kinase activity has been detected in vitro, however the physiological relevance of this activity is unknown. This chain is Kinase suppressor of Ras 1 (Ksr1), found in Mus musculus (Mouse).